Here is a 905-residue protein sequence, read N- to C-terminus: DNA mismatch repair protein MutS (905 aa).

Positions 389 to 410 (ERPANPEGTYPTDAETSGDTLP) are disordered. 638–645 (GPNMAGKS) is an ATP binding site. The tract at residues 826–847 (RDAARGTNSAPSRQTLPGLDLP) is disordered. Polar residues predominate over residues 831-840 (GTNSAPSRQT).

This sequence belongs to the DNA mismatch repair MutS family.

In terms of biological role, this protein is involved in the repair of mismatches in DNA. It is possible that it carries out the mismatch recognition step. This protein has a weak ATPase activity. This Nitratidesulfovibrio vulgaris (strain ATCC 29579 / DSM 644 / CCUG 34227 / NCIMB 8303 / VKM B-1760 / Hildenborough) (Desulfovibrio vulgaris) protein is DNA mismatch repair protein MutS.